The sequence spans 95 residues: Large ribosomal subunit protein eL42 (95 aa).

Cys-11, Cys-14, Cys-71, and Cys-74 together coordinate Zn(2+). A C4-type zinc finger spans residues 11–74 (CPRCNTHTEH…QVLVITCTVC (64 aa)).

The protein belongs to the eukaryotic ribosomal protein eL42 family. Part of the 50S ribosomal subunit. Zn(2+) is required as a cofactor.

Functionally, binds to the 23S rRNA. The polypeptide is Large ribosomal subunit protein eL42 (Aeropyrum pernix (strain ATCC 700893 / DSM 11879 / JCM 9820 / NBRC 100138 / K1)).